The primary structure comprises 387 residues: MFEFSDRLKVLPPYLFAELDRKKQEKIEQGVDVIDLGVGDPDMPTPKPIVEAAKKALENPENHKYPSYVGKYEFRKAVADWYKRRFDVDLDPNTEVITLIGSKEGIAHFPLAFVNPGDIVLCPDPAYPVYRIGAIFAGGTPYTVPLKEENNFLPDLDSIPEDVAKKAKIIWINYPNNPTSAPPTLEFYKKLVDWAKEYNVIIASDNAYSEIYTGQEKPPSILQVPGAKDVAIEFHSLSKTYNMTGWRIGMAVGNKELVAGLGKVKTNVDSGQFGAVQDAGIVALNLPEEEVEKIRDVYRERKKIMTEALEKIGLEIYRSDYTFYLWIKVPEGYTSAEFVGRLIDEAGIVCTPGNGFGEYGEGYFRISLTVPTERLLEAAERIKNLKL.

Positions 14 and 39 each coordinate substrate. Residues Y68, S102–K103, Y127, N177, Y208, and S236–S238 each bind pyridoxal 5'-phosphate. Residues K103, Y127, and N177 each contribute to the substrate site. K239 bears the N6-(pyridoxal phosphate)lysine mark. Residue R247 coordinates pyridoxal 5'-phosphate. R365 contacts substrate.

This sequence belongs to the class-I pyridoxal-phosphate-dependent aminotransferase family. LL-diaminopimelate aminotransferase subfamily. In terms of assembly, homodimer. Requires pyridoxal 5'-phosphate as cofactor.

It carries out the reaction (2S,6S)-2,6-diaminopimelate + 2-oxoglutarate = (S)-2,3,4,5-tetrahydrodipicolinate + L-glutamate + H2O + H(+). The protein operates within amino-acid biosynthesis; L-lysine biosynthesis via DAP pathway; LL-2,6-diaminopimelate from (S)-tetrahydrodipicolinate (aminotransferase route): step 1/1. Functionally, involved in the synthesis of meso-diaminopimelate (m-DAP or DL-DAP), required for both lysine and peptidoglycan biosynthesis. Catalyzes the direct conversion of tetrahydrodipicolinate to LL-diaminopimelate. The polypeptide is LL-diaminopimelate aminotransferase (Aquifex aeolicus (strain VF5)).